The following is a 164-amino-acid chain: UPF0304 protein YE1336 (164 aa).

Belongs to the UPF0304 family.

In Yersinia enterocolitica serotype O:8 / biotype 1B (strain NCTC 13174 / 8081), this protein is UPF0304 protein YE1336.